The primary structure comprises 1340 residues: DNA-directed RNA polymerase subunit beta (1340 aa).

This sequence belongs to the RNA polymerase beta chain family. The RNAP catalytic core consists of 2 alpha, 1 beta, 1 beta' and 1 omega subunit. When a sigma factor is associated with the core the holoenzyme is formed, which can initiate transcription.

It carries out the reaction RNA(n) + a ribonucleoside 5'-triphosphate = RNA(n+1) + diphosphate. In terms of biological role, DNA-dependent RNA polymerase catalyzes the transcription of DNA into RNA using the four ribonucleoside triphosphates as substrates. The sequence is that of DNA-directed RNA polymerase subunit beta from Baumannia cicadellinicola subsp. Homalodisca coagulata.